Reading from the N-terminus, the 190-residue chain is Cytoglobin (190 aa).

The interval 1 to 21 (MEKVPGDMEIERRERNEELSE) is disordered. A Globin domain is found at 18-167 (ELSEAERKAV…IYSHVTAAYK (150 aa)). Cysteine 38 and cysteine 83 are disulfide-bonded. Heme b-binding residues include histidine 81 and histidine 113.

It belongs to the globin family. In terms of assembly, monomeric. Homodimer; disulfide-linked in vitro. Also homooligomeric in vitro. The formation of an intramolecular disulfide bond between cysteines Cys-38 and Cys-83 specifically enhances the nitrite reductase activity. As to expression, widely expressed (at protein level).

It is found in the cytoplasm. The protein localises to the nucleus. It carries out the reaction Fe(II)-heme b-[protein] + nitric oxide + O2 = Fe(III)-heme b-[protein] + nitrate. The enzyme catalyses Fe(III)-heme b-[protein] + nitric oxide + H2O = Fe(II)-heme b-[protein] + nitrite + 2 H(+). It catalyses the reaction 2 superoxide + 2 H(+) = H2O2 + O2. The catalysed reaction is H2O2 + AH2 = A + 2 H2O. The nitric oxide dioxygenase activity is activated by a reducing system composed of cytochrome b5, its upstream reductase CYB5R3 and NADH. Its function is as follows. Probable multifunctional globin with a hexacoordinated heme iron required for the catalysis of various reactions depending on redox condition of the cell as well as oxygen availability. Has a nitric oxide dioxygenase (NOD) activity and is most probably involved in cell-mediated and oxygen-dependent nitric oxide consumption. By scavenging this second messenger may regulate several biological processes including endothelium-mediated vasodilation and vascular tone. Under normoxic conditions functions as a nitric oxide dioxygenase (NOD) but under hypoxic conditions the globin may switch its function to that of a nitrite (NO2) reductase (NiR), generating nitric oxide. Could also have peroxidase and superoxide dismutase activities, detoxifying reactive oxygen species and protecting cells against oxidative stress. Also binds dioxygen with low affinity and could function as an oxygen sensor but has probably no function as a respiratory oxygen carrier. This is Cytoglobin from Rattus norvegicus (Rat).